A 325-amino-acid chain; its full sequence is Phospho-N-acetylmuramoyl-pentapeptide-transferase (325 aa).

10 helical membrane passes run 3 to 23 (LMIYSVLVAFVVSLIQGPILI), 48 to 68 (GTPTMGGVIFIISSVITVFVV), 79 to 99 (AIFAFVAFGIIGLIDDSLKII), 106 to 126 (LKAYQKMILLLIVSSIIGFYA), 136 to 156 (IIVPFVHKTWNLGMFYIPFII), 174 to 194 (GLATSITLLVMTFFAVVSYAT), 199 to 219 (LAVFCSIVAGALLGFLKYNAY), 223 to 243 (VFMGDTGSLALGGVVGAVAMM), 246 to 266 (LPLIVIIVGGIYLAEALSVIL), and 298 to 318 (IVSIFSIITVILCLIGFLSLI).

This sequence belongs to the glycosyltransferase 4 family. MraY subfamily. Requires Mg(2+) as cofactor.

The protein localises to the cell membrane. The enzyme catalyses UDP-N-acetyl-alpha-D-muramoyl-L-alanyl-gamma-D-glutamyl-meso-2,6-diaminopimeloyl-D-alanyl-D-alanine + di-trans,octa-cis-undecaprenyl phosphate = di-trans,octa-cis-undecaprenyl diphospho-N-acetyl-alpha-D-muramoyl-L-alanyl-D-glutamyl-meso-2,6-diaminopimeloyl-D-alanyl-D-alanine + UMP. Its pathway is cell wall biogenesis; peptidoglycan biosynthesis. Functionally, catalyzes the initial step of the lipid cycle reactions in the biosynthesis of the cell wall peptidoglycan: transfers peptidoglycan precursor phospho-MurNAc-pentapeptide from UDP-MurNAc-pentapeptide onto the lipid carrier undecaprenyl phosphate, yielding undecaprenyl-pyrophosphoryl-MurNAc-pentapeptide, known as lipid I. This is Phospho-N-acetylmuramoyl-pentapeptide-transferase from Clostridium novyi (strain NT).